The sequence spans 382 residues: Proton extrusion protein PxcA (382 aa).

4 consecutive transmembrane segments (helical) span residues Val-162 to Ile-182, Ala-257 to Met-277, Ile-305 to Leu-325, and Phe-340 to Ile-360.

This sequence belongs to the CemA family.

It localises to the cell inner membrane. Its function is as follows. Required for H(+) efflux immediately after light irradiation to form a rapid H(+) concentration gradient across the thylakoid membranes. Together with PxcL, contributes to transient H(+) uptake following dark to light transition. The polypeptide is Proton extrusion protein PxcA (Synechococcus sp. (strain CC9605)).